Reading from the N-terminus, the 443-residue chain is Ribulose bisphosphate carboxylase large chain (443 aa).

Positions 89 and 139 each coordinate substrate. The Proton acceptor role is filled by Lys-141. Position 143 (Lys-143) interacts with substrate. Residues Lys-167, Asp-169, and Glu-170 each coordinate Mg(2+). Residue Lys-167 is modified to N6-carboxylysine. The active-site Proton acceptor is the His-260. Substrate is bound by residues Arg-261, His-293, and Ser-345.

Belongs to the RuBisCO large chain family. Type I subfamily. As to quaternary structure, heterohexadecamer of 8 large chains and 8 small chains; disulfide-linked. The disulfide link is formed within the large subunit homodimers. Requires Mg(2+) as cofactor. The disulfide bond which can form in the large chain dimeric partners within the hexadecamer appears to be associated with oxidative stress and protein turnover.

The protein localises to the plastid. It is found in the chloroplast. It carries out the reaction 2 (2R)-3-phosphoglycerate + 2 H(+) = D-ribulose 1,5-bisphosphate + CO2 + H2O. The enzyme catalyses D-ribulose 1,5-bisphosphate + O2 = 2-phosphoglycolate + (2R)-3-phosphoglycerate + 2 H(+). RuBisCO catalyzes two reactions: the carboxylation of D-ribulose 1,5-bisphosphate, the primary event in carbon dioxide fixation, as well as the oxidative fragmentation of the pentose substrate in the photorespiration process. Both reactions occur simultaneously and in competition at the same active site. The protein is Ribulose bisphosphate carboxylase large chain of Antirrhinum majus (Garden snapdragon).